The chain runs to 420 residues: 3-isopropylmalate dehydratase large subunit (420 aa).

[4Fe-4S] cluster is bound by residues Cys-300, Cys-360, and Cys-363.

Belongs to the aconitase/IPM isomerase family. LeuC type 2 subfamily. In terms of assembly, heterodimer of LeuC and LeuD. The cofactor is [4Fe-4S] cluster.

It carries out the reaction (2R,3S)-3-isopropylmalate = (2S)-2-isopropylmalate. Its pathway is amino-acid biosynthesis; L-leucine biosynthesis; L-leucine from 3-methyl-2-oxobutanoate: step 2/4. Its function is as follows. Catalyzes the isomerization between 2-isopropylmalate and 3-isopropylmalate, via the formation of 2-isopropylmaleate. The polypeptide is 3-isopropylmalate dehydratase large subunit (Clostridium kluyveri (strain ATCC 8527 / DSM 555 / NBRC 12016 / NCIMB 10680 / K1)).